Here is a 633-residue protein sequence, read N- to C-terminus: MPLTPTVQGFQWTLRGPDVETSPFGAPRAASHGVGRHQELRDPTVPGPTSSATNVSMVVSAGPWSGEKAEMNILEINKKSRPQLAENKQQFRNLKQKCLVTQVAYFLANRQNNYDYEDCKDLIKSMLRDERLLTEEKLAEELGQAEELRQYKVLVHSQERELTQLREKLQEGRDASRSLNQHLQALLTPDEPDNSQGRDLREQLAEGCRLAQHLVQKLSPENDDDEDEDVKVEEAEKVQELYAPREVQKAEEKEVPEDSLEECAITCSNSHHPCESNQPYGNTRITFEEDQVDSTLIDSSSHDEWLDAVCIIPENESDHEQEEEKGPVSPRNLQESEEEEAPQESWDEGDWTLSIPPDMSASYQSDRSTFHSVEEQQVGLALDIGRHWCDQVKKEDQEATSPRLSRELLDEKEPEVLQDSLDRFYSTPFEYLELPDLCQPYRSDFYSLQEQHLGLALDLDRMKKDQEEEEDQGPPCPRLSRELPEVVEPEDLQDSLDRWYSTPFSYPELPDSCQPYGSCFYSLEEEHVGFSLDVDEIEKYQEGEEDQKPPCPRLNEVLMEAEEPEVLQDSLDRCYSTTSTYFQLHASFQQYRSAFYSFEEQDVSLALDVDNRFFTLTVIRHHLAFQMGVIFPH.

A disordered region spans residues 15–52; sequence RGPDVETSPFGAPRAASHGVGRHQELRDPTVPGPTSSA. The stretch at 127 to 186 forms a coiled coil; the sequence is LRDERLLTEEKLAEELGQAEELRQYKVLVHSQERELTQLREKLQEGRDASRSLNQHLQAL. 5 Olduvai domains span residues 221-313, 314-402, 405-460, 461-552, and 555-633; these read ENDD…CIIP, ENES…ATSP, SREL…LDLD, RMKK…PPCP, and NEVL…IFPH. Residues 316-326 show a composition bias toward basic and acidic residues; the sequence is ESDHEQEEEKG. Positions 316–370 are disordered; that stretch reads ESDHEQEEEKGPVSPRNLQESEEEEAPQESWDEGDWTLSIPPDMSASYQSDRSTF. Residues 335-350 are compositionally biased toward acidic residues; the sequence is ESEEEEAPQESWDEGD. The disordered stretch occupies residues 463 to 484; the sequence is KKDQEEEEDQGPPCPRLSRELP.

This sequence belongs to the NBPF family. In terms of tissue distribution, expressed in testis and fetal heart, as well as in non small cell lung carcinoma and neuroblastoma cell line.

The protein localises to the cytoplasm. In Homo sapiens (Human), this protein is NBPF family member NBPF3.